A 320-amino-acid chain; its full sequence is Cell-cell adhesion glycoprotein 64 (320 aa).

Residues 1-19 form the signal peptide; the sequence is MNKFITLFVLLASVSVAMS. Disulfide bonds link C39–C57, C67–C79, C73–C86, C98–C110, C104–C115, C123–C138, C132–C147, C157–C171, and C165–C176. Residue N49 is glycosylated (N-linked (GlcNAc...) asparagine). N-linked (GlcNAc...) asparagine glycosylation occurs at N80. N141 and N158 each carry an N-linked (GlcNAc...) asparagine glycan. An N-linked (GlcNAc...) asparagine glycan is attached at N187. Cystine bridges form between C188–C202 and C194–C207. The N-linked (GlcNAc...) asparagine glycan is linked to N216. Intrachain disulfides connect C226–C246, C232–C234, C266–C285, and C270–C281. A lipid anchor (GPI-like-anchor amidated serine) is attached at S298. Residues 299 to 320 constitute a propeptide, removed in mature form; sequence SATTIAFNAFVVFAIVLSVLLF.

In terms of processing, contains 18 disulfide bonds. Post-translationally, the GPI-like-anchor contains a phosphoceramide group, rather than a phosphatidyl group.

It localises to the cell membrane. In terms of biological role, cell-cell adhesion during development. The sequence is that of Cell-cell adhesion glycoprotein 64 from Heterostelium pallidum (Cellular slime mold).